We begin with the raw amino-acid sequence, 119 residues long: MKQVNMNRNERRQMRHKRVIKKIRRIDNDRPVMIVVKSNSHISAQVWDFNQNKIIASSSSVSLDLVNGNKENAAVVGTDIANKLLKMKIDEITFDHGGSKYHGRIAALADAARKAGLKF.

This sequence belongs to the universal ribosomal protein uL18 family. As to quaternary structure, part of the 50S ribosomal subunit; part of the 5S rRNA/L5/L18/L25 subcomplex. Contacts the 5S and 23S rRNAs.

Its function is as follows. This is one of the proteins that bind and probably mediate the attachment of the 5S RNA into the large ribosomal subunit, where it forms part of the central protuberance. The chain is Large ribosomal subunit protein uL18 from Mycoplasmoides gallisepticum (strain R(low / passage 15 / clone 2)) (Mycoplasma gallisepticum).